The following is a 366-amino-acid chain: Phospho-N-acetylmuramoyl-pentapeptide-transferase (366 aa).

The next 10 helical transmembrane spans lie at 3 to 23 (QIII…PVLI), 52 to 72 (MGGI…GIVG), 80 to 100 (LTAS…LGFA), 120 to 140 (LIGQ…FPNA), 161 to 181 (LAIG…YILI), 197 to 217 (LAAG…FWQF), 238 to 258 (LAIL…WNAA), 262 to 282 (IFMG…LSVA), 287 to 307 (LLMI…VIQV), and 341 to 361 (FWLI…GEWL).

It belongs to the glycosyltransferase 4 family. MraY subfamily. The cofactor is Mg(2+).

The protein localises to the cell membrane. It catalyses the reaction UDP-N-acetyl-alpha-D-muramoyl-L-alanyl-gamma-D-glutamyl-meso-2,6-diaminopimeloyl-D-alanyl-D-alanine + di-trans,octa-cis-undecaprenyl phosphate = di-trans,octa-cis-undecaprenyl diphospho-N-acetyl-alpha-D-muramoyl-L-alanyl-D-glutamyl-meso-2,6-diaminopimeloyl-D-alanyl-D-alanine + UMP. The protein operates within cell wall biogenesis; peptidoglycan biosynthesis. Its function is as follows. Catalyzes the initial step of the lipid cycle reactions in the biosynthesis of the cell wall peptidoglycan: transfers peptidoglycan precursor phospho-MurNAc-pentapeptide from UDP-MurNAc-pentapeptide onto the lipid carrier undecaprenyl phosphate, yielding undecaprenyl-pyrophosphoryl-MurNAc-pentapeptide, known as lipid I. The protein is Phospho-N-acetylmuramoyl-pentapeptide-transferase of Corynebacterium diphtheriae (strain ATCC 700971 / NCTC 13129 / Biotype gravis).